Here is a 212-residue protein sequence, read N- to C-terminus: Cytidylate kinase (212 aa).

Position 7–15 (7–15) interacts with ATP; sequence GPAASGKGT.

Belongs to the cytidylate kinase family. Type 1 subfamily.

Its subcellular location is the cytoplasm. The catalysed reaction is CMP + ATP = CDP + ADP. It catalyses the reaction dCMP + ATP = dCDP + ADP. This chain is Cytidylate kinase, found in Rhodopseudomonas palustris (strain HaA2).